Reading from the N-terminus, the 201-residue chain is Potassium-transporting ATPase KdpC subunit (201 aa).

Residues 13–33 (IIFIIFTILCGGIYTIFITGI) traverse the membrane as a helical segment.

This sequence belongs to the KdpC family. The system is composed of three essential subunits: KdpA, KdpB and KdpC.

The protein resides in the cell membrane. Functionally, part of the high-affinity ATP-driven potassium transport (or Kdp) system, which catalyzes the hydrolysis of ATP coupled with the electrogenic transport of potassium into the cytoplasm. This subunit acts as a catalytic chaperone that increases the ATP-binding affinity of the ATP-hydrolyzing subunit KdpB by the formation of a transient KdpB/KdpC/ATP ternary complex. The chain is Potassium-transporting ATPase KdpC subunit from Clostridium botulinum (strain Alaska E43 / Type E3).